Consider the following 439-residue polypeptide: Enolase (439 aa).

Histidine 157 and glutamate 166 together coordinate substrate. The active-site Proton donor is the glutamate 209. Positions 244, 297, and 324 each coordinate Mg(2+). Residues glutamate 297 and aspartate 324 each coordinate substrate. Residue lysine 349 is the Proton acceptor of the active site. Residues 376–379 (SHRS) and lysine 400 each bind substrate.

This sequence belongs to the enolase family. As to quaternary structure, homodimer. Mg(2+) serves as cofactor.

It localises to the cytoplasm. It catalyses the reaction (2R)-2-phosphoglycerate = phosphoenolpyruvate + H2O. It functions in the pathway carbohydrate degradation; glycolysis; pyruvate from D-glyceraldehyde 3-phosphate: step 4/5. In Mastigamoeba balamuthi (Phreatamoeba balamuthi), this protein is Enolase (ENOL).